The following is a 632-amino-acid chain: ATP-dependent zinc metalloprotease FtsH (632 aa).

At 1–9 the chain is on the cytoplasmic side; the sequence is MKPTNEPKK. Residues 10–30 form a helical membrane-spanning segment; it reads PFFQSPIVLAVLGGILLIFFL. Over 31 to 116 the chain is Periplasmic; the sequence is RSFNSDGSFS…INYSGFSESN (86 aa). The chain crosses the membrane as a helical span at residues 117–137; that stretch reads FFTDMLGWLMPILVILGLWMF. Residues 138 to 632 are Cytoplasmic-facing; sequence MANRMQKNMG…RLIPLEEQAS (495 aa). 210–217 serves as a coordination point for ATP; that stretch reads GPPGTGKT. Zn(2+) is bound at residue H434. E435 is an active-site residue. Positions 438 and 511 each coordinate Zn(2+).

In the central section; belongs to the AAA ATPase family. It in the C-terminal section; belongs to the peptidase M41 family. Homohexamer. It depends on Zn(2+) as a cofactor.

It is found in the cell inner membrane. Functionally, acts as a processive, ATP-dependent zinc metallopeptidase for both cytoplasmic and membrane proteins. Plays a role in the quality control of integral membrane proteins. The protein is ATP-dependent zinc metalloprotease FtsH of Helicobacter pylori (strain J99 / ATCC 700824) (Campylobacter pylori J99).